Consider the following 105-residue polypeptide: MKYAIVEISGRQFWIETGKYYDLNRIPTELEKEIILNRVLLANNDGEILIGKPYLDSVKVKGKILEHLRGRKTIVYKMRPKKKTRKKQGHRQDLTRVLIEEIKIN.

This sequence belongs to the bacterial ribosomal protein bL21 family. Part of the 50S ribosomal subunit.

The protein resides in the plastid. Its subcellular location is the chloroplast. Functionally, this protein binds to 23S rRNA. This chain is Large ribosomal subunit protein bL21c, found in Thalassiosira pseudonana (Marine diatom).